Reading from the N-terminus, the 33-residue chain is Cecropin-C (33 aa).

At Lys21 the chain carries 5-hydroxylysine.

Monomer. In terms of tissue distribution, hemolymph.

The protein localises to the secreted. Cecropins have lytic and antibacterial activity against several Gram-positive and Gram-negative bacteria. Also has activity against fungi. The chain is Cecropin-C from Heliothis virescens (Tobacco budworm moth).